The chain runs to 199 residues: Neurotrophic factor BDNF precursor form (199 aa).

A disordered region spans residues 1–23 (GQGSLAYPGLRTQGNLETLSGPN). Positions 1-100 (GQGSLAYPGL…AANMSMRVRR (100 aa)) are excised as a propeptide. The segment covering 12–23 (TQGNLETLSGPN) has biased composition (polar residues). A glycan (N-linked (GlcNAc...) asparagine) is linked at Asn-93. Cys-113 and Cys-180 are oxidised to a cystine.

This sequence belongs to the NGF-beta family.

It is found in the secreted. In terms of biological role, promotes the survival of neuronal populations that are all located either in the central nervous system or directly connected to it. This Morelia spilota (Carpet python) protein is Neurotrophic factor BDNF precursor form (BDNF).